We begin with the raw amino-acid sequence, 83 residues long: MKTLLLTLVVVTIVCLDLGYTRRCFNQQSSEPQTNKSCPPGENSCYNKQWRDHRGTIIERGCGCPQVKSGIKLTCCQSDDCNN.

The first 21 residues, M1 to T21, serve as a signal peptide directing secretion. Disulfide bonds link C24-C45, C38-C62, C64-C75, and C76-C81.

Belongs to the three-finger toxin family. Short-chain subfamily. Type I alpha-neurotoxin sub-subfamily. Expressed by the venom gland.

It is found in the secreted. Functionally, binds to muscle nicotinic acetylcholine receptor (nAChR) and inhibit acetylcholine from binding to the receptor, thereby impairing neuromuscular transmission. In Laticauda laticaudata (Blue-ringed sea krait), this protein is Short neurotoxin VAN-29.